The chain runs to 208 residues: Flavin-dependent thymidylate synthase (208 aa).

In terms of domain architecture, ThyX spans 1–208; it reads MEVICKHYTP…QYLFEDCLKH (208 aa). Residues S50 and 74-76 each bind FAD; that span reads RHR. DUMP-binding positions include 71 to 74, 84 to 86, and K147; these read ELSR and SSR. Residues 74–84 carry the ThyX motif motif; it reads RHRIASLSVKS. FAD-binding positions include 163 to 165 and N169; that span reads NAR. R174 is a dUMP binding site. R174 serves as the catalytic Involved in ionization of N3 of dUMP, leading to its activation.

This sequence belongs to the thymidylate synthase ThyX family. In terms of assembly, homotetramer. FAD is required as a cofactor.

It carries out the reaction dUMP + (6R)-5,10-methylene-5,6,7,8-tetrahydrofolate + NADPH + H(+) = dTMP + (6S)-5,6,7,8-tetrahydrofolate + NADP(+). It functions in the pathway pyrimidine metabolism; dTTP biosynthesis. In terms of biological role, catalyzes the reductive methylation of 2'-deoxyuridine-5'-monophosphate (dUMP) to 2'-deoxythymidine-5'-monophosphate (dTMP) while utilizing 5,10-methylenetetrahydrofolate (mTHF) as the methyl donor, and NAD(P)H and FADH(2) as the reductant. The protein is Flavin-dependent thymidylate synthase of Helicobacter pylori (strain ATCC 700392 / 26695) (Campylobacter pylori).